A 70-amino-acid chain; its full sequence is Large ribosomal subunit protein eL38 (70 aa).

Residue lysine 4 forms a Glycyl lysine isopeptide (Lys-Gly) (interchain with G-Cter in SUMO2) linkage. Position 9 is an N6-acetyllysine; alternate (lysine 9). Lysine 9 participates in a covalent cross-link: Glycyl lysine isopeptide (Lys-Gly) (interchain with G-Cter in SUMO2); alternate. Lysine 67 carries the post-translational modification N6-acetyllysine.

This sequence belongs to the eukaryotic ribosomal protein eL38 family. As to quaternary structure, component of the large ribosomal subunit.

The protein localises to the cytoplasm. Functionally, component of the large ribosomal subunit. The ribosome is a large ribonucleoprotein complex responsible for the synthesis of proteins in the cell. The sequence is that of Large ribosomal subunit protein eL38 (Rpl38) from Mus musculus (Mouse).